The primary structure comprises 185 residues: Large ribosomal subunit protein uL5 (185 aa).

Belongs to the universal ribosomal protein uL5 family. In terms of assembly, part of the 50S ribosomal subunit; part of the 5S rRNA/L5/L18/L25 subcomplex. Contacts the 5S rRNA and the P site tRNA. Forms a bridge to the 30S subunit in the 70S ribosome.

In terms of biological role, this is one of the proteins that bind and probably mediate the attachment of the 5S RNA into the large ribosomal subunit, where it forms part of the central protuberance. In the 70S ribosome it contacts protein S13 of the 30S subunit (bridge B1b), connecting the 2 subunits; this bridge is implicated in subunit movement. Contacts the P site tRNA; the 5S rRNA and some of its associated proteins might help stabilize positioning of ribosome-bound tRNAs. The protein is Large ribosomal subunit protein uL5 of Afipia carboxidovorans (strain ATCC 49405 / DSM 1227 / KCTC 32145 / OM5) (Oligotropha carboxidovorans).